Reading from the N-terminus, the 307-residue chain is Acyl transferase (307 aa).

Active-site charge relay system residues include Ser116, Asp213, and His243.

Belongs to the LuxD family.

Its pathway is lipid metabolism; fatty acid reduction for biolumincescence. Its function is as follows. Acyl transferase is part of the fatty acid reductase system required for aldehyde biosynthesis; it produces fatty acids for the luminescent reaction. The protein is Acyl transferase of Aliivibrio fischeri (strain ATCC 700601 / ES114) (Vibrio fischeri).